We begin with the raw amino-acid sequence, 530 residues long: Chaperone Ric-8A (530 aa).

Phosphoserine is present on Ser-435. 2 positions are modified to phosphothreonine: Thr-440 and Thr-442. 4 positions are modified to phosphoserine: Ser-501, Ser-522, Ser-523, and Ser-527.

This sequence belongs to the synembryn family. In terms of assembly, interacts with GDP-bound G alpha proteins GNAI1, GNAO1 and GNAQ, and with GNA13 with lower affinity. Does not interact with G-alpha proteins when they are in complex with subunits beta and gamma. Interacts (via C-terminus) with RGS14; the interaction stimulates the dissociation of the complex between RGS14 and the active GTP-bound form of GNAI1. Interacts with NCS1; interaction is favored in the absence of Ca(2+) and myristoylation of NCS1 is not required. Phosphorylated at Ser-435 and Thr-440 by CK2, stabilizing its interface with G alpha proteins.

It is found in the cytoplasm. Its subcellular location is the cell cortex. Its function is as follows. Chaperone that specifically binds and folds nascent G alpha proteins prior to G protein heterotrimer formation, promoting their stability and activity: folds GNAI1, GNAO1, GNA13 and GNAQ. Does not fold G(s) G-alpha proteins GNAS nor GNAL. Also acts as a guanine nucleotide exchange factor (GEF) for G alpha proteins by stimulating exchange of bound GDP for free GTP. Involved in regulation of microtubule pulling forces during mitotic movement of chromosomes by stimulating G(i)-alpha protein (GNAI1), possibly leading to release G(i)-alpha-GTP and NuMA proteins from the NuMA-GPSM2-G(i)-alpha-GDP complex. Also acts as an activator for G(q)-alpha (GNAQ) protein by enhancing the G(q)-coupled receptor-mediated ERK activation. The polypeptide is Chaperone Ric-8A (RIC8A) (Bos taurus (Bovine)).